A 379-amino-acid polypeptide reads, in one-letter code: Probable 3-phenylpropionic acid transporter (379 aa).

Residues 1 to 4 (MVLQ) are Cytoplasmic-facing. A helical transmembrane segment spans residues 5–31 (STRWLALGYFTYFFSYGIFLPFWSVWL). Residues 32 to 37 (KGIGLT) lie on the Periplasmic side of the membrane. A helical transmembrane segment spans residues 38–66 (PETIGLLLGAGLVARFLGSLLIAPRVSDP). The Cytoplasmic segment spans residues 67 to 70 (SRLI). A helical transmembrane segment spans residues 71–96 (SALRVLALLTLLFAVAFWAGAHVAWL). The Periplasmic segment spans residues 97-100 (MLVM). The helical transmembrane segment at 101 to 118 (IGFNLFFSPLVPLTDALA) threads the bilayer. Over 119-129 (NTWQKQFPLDY) the chain is Cytoplasmic. The helical transmembrane segment at 130–152 (GKVRLWGSVAFVIGSALTGKLVT) threads the bilayer. Residues 153 to 155 (MFD) lie on the Periplasmic side of the membrane. A helical transmembrane segment spans residues 156–175 (YRVILALLTLGVASMLLGFL). Topologically, residues 176–207 (IRPTIQPQGASRQQESTGWSAWLALVRQNWRF) are cytoplasmic. The helical transmembrane segment at 208-227 (LACVCLLQGAHAAYYGFSAI) threads the bilayer. Over 228 to 231 (YWQA) the chain is Periplasmic. A helical transmembrane segment spans residues 232–256 (AGYSASAVGYLWSLGVVAEVIIFAL). Topologically, residues 257–266 (SNKLFRRCSA) are cytoplasmic. A helical membrane pass occupies residues 267-286 (RDMLLISAICGVVRWGIMGA). The Periplasmic portion of the chain corresponds to 287-289 (TTA). Residues 290–312 (LPWLIVVQILHCGTFTVCHLAAM) traverse the membrane as a helical segment. The Cytoplasmic portion of the chain corresponds to 313-323 (RYIAARQGSEV). A helical membrane pass occupies residues 324–351 (IRLQAVYSAVAMGGSIAIMTVFAGFLYQ). Over 352-354 (YLG) the chain is Periplasmic. Residues 355-375 (HGVFWVMALVALPAMFLRPKV) form a helical membrane-spanning segment. The Cytoplasmic portion of the chain corresponds to 376 to 379 (VPSC).

This sequence belongs to the major facilitator superfamily. Phenyl propionate permease (PPP) (TC 2.A.1.27) family.

Its subcellular location is the cell inner membrane. Probable permease involved in the uptake of 3-phenylpropionic acid. The sequence is that of Probable 3-phenylpropionic acid transporter (hcaT) from Escherichia coli (strain K12).